Reading from the N-terminus, the 393-residue chain is RNA pseudouridine synthase 7 (393 aa).

In terms of domain architecture, S4 RNA-binding spans 49–118; sequence KTIVDLFTDE…GDITILQNEA (70 aa). Residue Asp-162 is part of the active site.

The protein belongs to the pseudouridine synthase RluA family.

The enzyme catalyses a uridine in RNA = a pseudouridine in RNA. This chain is RNA pseudouridine synthase 7, found in Oryza sativa subsp. japonica (Rice).